A 205-amino-acid chain; its full sequence is Glycerol-3-phosphate acyltransferase (205 aa).

6 helical membrane passes run 5–25 (LIATVLFGYLLGSVSFSYIIA), 56–76 (ICVLLLDVAKGVAPALLAIAL), 84–104 (VPALAGLAAILGHNWPIYFGF), 114–134 (IGVVATLLFLPALCAGIVAIL), 144–164 (LGSLLFAVLTPIAALIMLPFF), and 165–185 (HYPLEYIYLAVLLAILSLWRH).

It belongs to the PlsY family. In terms of assembly, probably interacts with PlsX.

The protein localises to the cell membrane. It carries out the reaction an acyl phosphate + sn-glycerol 3-phosphate = a 1-acyl-sn-glycero-3-phosphate + phosphate. It participates in lipid metabolism; phospholipid metabolism. In terms of biological role, catalyzes the transfer of an acyl group from acyl-phosphate (acyl-PO(4)) to glycerol-3-phosphate (G3P) to form lysophosphatidic acid (LPA). This enzyme utilizes acyl-phosphate as fatty acyl donor, but not acyl-CoA or acyl-ACP. This chain is Glycerol-3-phosphate acyltransferase, found in Shouchella clausii (strain KSM-K16) (Alkalihalobacillus clausii).